The primary structure comprises 318 residues: Acetyl-coenzyme A carboxylase carboxyl transferase subunit alpha (318 aa).

The CoA carboxyltransferase C-terminal domain maps to 38-292 (KLEKRLAKLE…NKTITKSLHA (255 aa)).

It belongs to the AccA family. Acetyl-CoA carboxylase is a heterohexamer composed of biotin carboxyl carrier protein (AccB), biotin carboxylase (AccC) and two subunits each of ACCase subunit alpha (AccA) and ACCase subunit beta (AccD).

The protein resides in the cytoplasm. It carries out the reaction N(6)-carboxybiotinyl-L-lysyl-[protein] + acetyl-CoA = N(6)-biotinyl-L-lysyl-[protein] + malonyl-CoA. It participates in lipid metabolism; malonyl-CoA biosynthesis; malonyl-CoA from acetyl-CoA: step 1/1. Component of the acetyl coenzyme A carboxylase (ACC) complex. First, biotin carboxylase catalyzes the carboxylation of biotin on its carrier protein (BCCP) and then the CO(2) group is transferred by the carboxyltransferase to acetyl-CoA to form malonyl-CoA. In Listeria innocua serovar 6a (strain ATCC BAA-680 / CLIP 11262), this protein is Acetyl-coenzyme A carboxylase carboxyl transferase subunit alpha.